Consider the following 111-residue polypeptide: Small ribosomal subunit protein uS10 (111 aa).

The protein belongs to the universal ribosomal protein uS10 family. Part of the 30S ribosomal subunit.

Functionally, involved in the binding of tRNA to the ribosomes. This chain is Small ribosomal subunit protein uS10, found in Protochlamydia amoebophila (strain UWE25).